The sequence spans 77 residues: Translational regulator CsrA (77 aa).

This sequence belongs to the CsrA/RsmA family. In terms of assembly, homodimer; the beta-strands of each monomer intercalate to form a hydrophobic core, while the alpha-helices form wings that extend away from the core.

The protein localises to the cytoplasm. Its function is as follows. A translational regulator that binds mRNA to regulate translation initiation and/or mRNA stability. Usually binds in the 5'-UTR at or near the Shine-Dalgarno sequence preventing ribosome-binding, thus repressing translation. Its main target seems to be the major flagellin gene, while its function is anatagonized by FliW. The sequence is that of Translational regulator CsrA from Desulfitobacterium hafniense (strain Y51).